We begin with the raw amino-acid sequence, 200 residues long: Pyrrolidone-carboxylate peptidase (200 aa).

Catalysis depends on residues Glu-78, Cys-141, and His-165.

The protein belongs to the peptidase C15 family. As to quaternary structure, homotetramer.

It is found in the cytoplasm. The catalysed reaction is Release of an N-terminal pyroglutamyl group from a polypeptide, the second amino acid generally not being Pro.. Its function is as follows. Removes 5-oxoproline from various penultimate amino acid residues except L-proline. This chain is Pyrrolidone-carboxylate peptidase, found in Thermococcus onnurineus (strain NA1).